Here is a 505-residue protein sequence, read N- to C-terminus: UDP-N-acetylglucosamine diphosphorylase 1 (505 aa).

Over residues 1 to 10 (MIEPSMEREN) the composition is skewed to basic and acidic residues. The disordered stretch occupies residues 1–32 (MIEPSMERENGALTAATTTTTAVTSPPPMASS). Residues 14-24 (TAATTTTTAVT) are compositionally biased toward low complexity. The short motif at 134–137 (LSGG) is the Substrate binding element. Asn253 lines the substrate pocket. Positions 335-336 (EY) match the Substrate binding motif. Position 432 (Lys432) interacts with substrate.

The protein belongs to the UDPGP type 1 family. Monomer. Mg(2+) serves as cofactor. Requires Mn(2+) as cofactor. Expressed in root tips, stipules and mature pollen grains.

It carries out the reaction N-acetyl-alpha-D-glucosamine 1-phosphate + UTP + H(+) = UDP-N-acetyl-alpha-D-glucosamine + diphosphate. The enzyme catalyses N-acetyl-alpha-D-galactosamine 1-phosphate + UTP + H(+) = UDP-N-acetyl-alpha-D-galactosamine + diphosphate. It participates in nucleotide-sugar biosynthesis; UDP-N-acetyl-alpha-D-glucosamine biosynthesis; UDP-N-acetyl-alpha-D-glucosamine from N-acetyl-alpha-D-glucosamine 1-phosphate: step 1/1. With respect to regulation, inhibited by hygromycin and streptomycin, but not by gentamycin or kanamycin. Uridylyltransferase involved in the biosynthesis of UDP-glucosamine, an essential precursor for glycoprotein and glycolipid synthesis. Can use both UDP-glucosamine and the 4-epimer UDP-galactosamine as substrates, but no other sugars or NTPs. Acts redundantly with GLCNAC1PUT2. Required for gametogenesis and embryo development. In Arabidopsis thaliana (Mouse-ear cress), this protein is UDP-N-acetylglucosamine diphosphorylase 1 (GLCNAC1PUT1).